A 453-amino-acid chain; its full sequence is MIPIIVLIGRTNVGKSTLFNVLTKTRDALVANYPGITRDRQYGYCKLQSNKKIILIDTAGLDIKLNEIEKQAQAQTLIAIKEAHLILFLVNARDGLMPQEYEISKNIRKYQKKTILVINKIDGINEASKINEFYSLGFEKIQKISASHNQGINTLINRYLIPWISEKFKKKITENLYKDTELKKIAIKVAFIGRPNVGKSTLINGILKEERMITSNTPGTTLDSISTPIKYNYENYTLIDTAGASKKKKKINDFQRFSIIKTLQTIEKSNVILLIIDASLQTCHQDLSLADFIIHSGKGIVVVVNKCDLFNSVELKKIKELIKSKLKFLYFSKIHFISALYKKGIFQLFKSIKESYEDSKRKISTSTLIKTMHIAIKKHQPPIIKGRRIKLKYAHLGSSNPPKIIIHGNQVKYLSLPYKRYLINFFYKTLKIKGTPIQIQFKDNENPYVKNKN.

EngA-type G domains are found at residues proline 3–lysine 167 and isoleucine 187–lysine 360. GTP is bound by residues glycine 9–serine 16, aspartate 57–leucine 61, asparagine 119–aspartate 122, glycine 193–serine 200, aspartate 240–alanine 244, and asparagine 305–aspartate 308. The 85-residue stretch at arginine 361 to glutamate 445 folds into the KH-like domain.

The protein belongs to the TRAFAC class TrmE-Era-EngA-EngB-Septin-like GTPase superfamily. EngA (Der) GTPase family. Associates with the 50S ribosomal subunit.

Its function is as follows. GTPase that plays an essential role in the late steps of ribosome biogenesis. This chain is GTPase Der, found in Buchnera aphidicola subsp. Acyrthosiphon pisum (strain 5A).